The sequence spans 322 residues: CRISPR-associated protein Cas1 1 (322 aa).

Mn(2+) is bound by residues E149, H214, and E229.

Belongs to the CRISPR-associated endonuclease Cas1 family. Homodimer, forms a heterotetramer with a Cas2 homodimer. The cofactor is Mg(2+). Mn(2+) serves as cofactor.

Functionally, CRISPR (clustered regularly interspaced short palindromic repeat), is an adaptive immune system that provides protection against mobile genetic elements (viruses, transposable elements and conjugative plasmids). CRISPR clusters contain spacers, sequences complementary to antecedent mobile elements, and target invading nucleic acids. CRISPR clusters are transcribed and processed into CRISPR RNA (crRNA). Acts as a dsDNA endonuclease. Involved in the integration of spacer DNA into the CRISPR cassette. The chain is CRISPR-associated protein Cas1 1 from Methanobrevibacter ruminantium (strain ATCC 35063 / DSM 1093 / JCM 13430 / OCM 146 / M1) (Methanobacterium ruminantium).